A 142-amino-acid chain; its full sequence is Movement protein (142 aa).

A disordered region spans residues 1–142 (MDLPEDQARF…LDRSESLSRY (142 aa)). 2 stretches are compositionally biased toward polar residues: residues 9-22 (RFTN…TSME) and 33-43 (LYQSASRSQMA). Low complexity predominate over residues 50–62 (SIISRTSSWRTSP). Composition is skewed to polar residues over residues 74–95 (MNSI…SASP) and 113–124 (TTLQRTNSGFST). Positions 125-142 (KETEMPRLLDRSESLSRY) are enriched in basic and acidic residues.

Belongs to the luteoviruses movement protein family.

Transports viral genome to neighboring plant cells directly through plasmosdesmata, without any budding. The movement protein allows efficient cell to cell propagation, by bypassing the host cell wall barrier. In Cicer arietinum (Chickpea), this protein is Movement protein.